The primary structure comprises 1687 residues: A-kinase anchor protein SPHKAP (1687 aa).

Positions 1–14 (MDVNSRLSVQSNVE) are enriched in polar residues. 2 disordered regions span residues 1–25 (MDVN…PEPQ) and 272–293 (RKHR…ENTS). Residues 914–931 (FAEELAETVVSMATEIAA) form a PKA-RII subunit binding domain region. The segment at 964-989 (LKRKKENSSAGSTVRKHKPPRLSEIK) is disordered. 8 positions are modified to phosphoserine: serine 1010, serine 1070, serine 1092, serine 1105, serine 1106, serine 1109, serine 1244, and serine 1273. 2 disordered regions span residues 1363–1406 (VTEG…SPRR) and 1421–1520 (DQKE…PDDT). Positions 1366–1375 (GNHSPVSSPG) are enriched in polar residues. Residues 1382–1393 (KPSDFDPRRETS) are compositionally biased toward basic and acidic residues. The span at 1461–1470 (TAPSTCQSSR) shows a compositional bias: polar residues. Positions 1482-1494 (EVLKEDIPRDESR) are enriched in basic and acidic residues. Low complexity predominate over residues 1495–1508 (NPPSSSEESTGSWS).

The protein belongs to the AKAP110 family. Interacts (via the PKA-RII subunit binding domain) with the RI subunit of PKA. Interacts with SPHK1; the interaction greatly reduces SPHK1 activity.

The protein resides in the cytoplasm. Its function is as follows. Anchoring protein that binds preferentially to the type I regulatory subunit of c-AMP-dependent protein kinase (PKA type I) and targets it to distinct subcellular compartments. May act as a converging factor linking cAMP and sphingosine signaling pathways. Plays a regulatory role in the modulation of SPHK1. The chain is A-kinase anchor protein SPHKAP (Sphkap) from Mus musculus (Mouse).